The chain runs to 57 residues: Small ribosomal subunit protein eS27 (57 aa).

Residues C10, C13, C29, and C32 each contribute to the Zn(2+) site. A C4-type zinc finger spans residues 10–32 (CDDCENEQVLFGKAANTVNCAVC).

The protein belongs to the eukaryotic ribosomal protein eS27 family. In terms of assembly, part of the 30S ribosomal subunit. Zn(2+) serves as cofactor.

The polypeptide is Small ribosomal subunit protein eS27 (Natronomonas pharaonis (strain ATCC 35678 / DSM 2160 / CIP 103997 / JCM 8858 / NBRC 14720 / NCIMB 2260 / Gabara) (Halobacterium pharaonis)).